A 121-amino-acid chain; its full sequence is Large ribosomal subunit protein uL14 (121 aa).

This sequence belongs to the universal ribosomal protein uL14 family. As to quaternary structure, part of the 50S ribosomal subunit. Forms a cluster with proteins L3 and L19. In the 70S ribosome, L14 and L19 interact and together make contacts with the 16S rRNA in bridges B5 and B8.

Functionally, binds to 23S rRNA. Forms part of two intersubunit bridges in the 70S ribosome. This Synechococcus sp. (strain CC9605) protein is Large ribosomal subunit protein uL14.